The primary structure comprises 317 residues: Olfactory receptor 5AP2 (317 aa).

Residues 1-32 (MVRSGKGIQNKNATEVTEFILLGLSDNPDLQG) are Extracellular-facing. A glycan (N-linked (GlcNAc...) asparagine) is linked at Asn-12. A helical transmembrane segment spans residues 33–53 (VLFALFLIIYTMTLVGNLGMM). At 54–61 (ALIKIDRS) the chain is on the cytoplasmic side. A helical transmembrane segment spans residues 62–82 (LHTPMYFFLSSLSFVDASYSS). Over 83 to 106 (SVTPKMLVNLMAEDKSISFNGCAT) the chain is Extracellular. A disulfide bridge links Cys-104 with Cys-196. A helical membrane pass occupies residues 107–127 (QFFFFGSFLGTECFLLAMMAY). The Cytoplasmic portion of the chain corresponds to 128-140 (DRYAAIWNPLLYP). A helical transmembrane segment spans residues 141 to 161 (VLMSGRICFMLVSTSFLAGFG). Residues 162–203 (NAAIHTGMTFRLSFCGSNKINHFYCDTPPLLKLSCSDTHING) lie on the Extracellular side of the membrane. A helical transmembrane segment spans residues 204-224 (IVIMAFSSFNVISCVLIVLIS). The Cytoplasmic segment spans residues 225–244 (YLCILIAILKMPSAEGRHKA). The helical transmembrane segment at 245–265 (FSTCASHLMAVTIFFGTILFM) threads the bilayer. The Extracellular portion of the chain corresponds to 266-278 (YLRPTSSYSMEQD). A helical transmembrane segment spans residues 279 to 299 (KVVSVFYTVVIPMLNPLIYSL). The Cytoplasmic portion of the chain corresponds to 300–317 (KNKDVKKAVKKILHNYVV).

It belongs to the G-protein coupled receptor 1 family.

Its subcellular location is the cell membrane. Odorant receptor. The protein is Olfactory receptor 5AP2 of Mus musculus (Mouse).